We begin with the raw amino-acid sequence, 87 residues long: Small ribosomal subunit protein bS18 (87 aa).

Over residues 1-19 the composition is skewed to basic residues; it reads MSTRSRARKRSRVRSRTRR. Residues 1–25 are disordered; the sequence is MSTRSRARKRSRVRSRTRRKDPIFV.

Belongs to the bacterial ribosomal protein bS18 family. In terms of assembly, part of the 30S ribosomal subunit. Forms a tight heterodimer with protein bS6.

Its function is as follows. Binds as a heterodimer with protein bS6 to the central domain of the 16S rRNA, where it helps stabilize the platform of the 30S subunit. This chain is Small ribosomal subunit protein bS18, found in Rhodopirellula baltica (strain DSM 10527 / NCIMB 13988 / SH1).